The sequence spans 259 residues: Deoxyribose-phosphate aldolase (259 aa).

Asp104 acts as the Proton donor/acceptor in catalysis. Residue Lys168 is the Schiff-base intermediate with acetaldehyde of the active site. Lys200 serves as the catalytic Proton donor/acceptor.

Belongs to the DeoC/FbaB aldolase family. DeoC type 2 subfamily.

It is found in the cytoplasm. The catalysed reaction is 2-deoxy-D-ribose 5-phosphate = D-glyceraldehyde 3-phosphate + acetaldehyde. It participates in carbohydrate degradation; 2-deoxy-D-ribose 1-phosphate degradation; D-glyceraldehyde 3-phosphate and acetaldehyde from 2-deoxy-alpha-D-ribose 1-phosphate: step 2/2. Catalyzes a reversible aldol reaction between acetaldehyde and D-glyceraldehyde 3-phosphate to generate 2-deoxy-D-ribose 5-phosphate. The polypeptide is Deoxyribose-phosphate aldolase (Agrobacterium fabrum (strain C58 / ATCC 33970) (Agrobacterium tumefaciens (strain C58))).